The following is a 355-amino-acid chain: Methyltransferase FUS9 (355 aa).

Residues Tyr18, Asn63, Asp86, Ser123, and Phe124 each contribute to the S-adenosyl-L-homocysteine site. Phe231 provides a ligand contact to Mg(2+).

The protein belongs to the methyltransferase superfamily. Type-7 methyltransferase family. Mg(2+) serves as cofactor.

It participates in mycotoxin biosynthesis. Functionally, methyltransferase; part of the gene cluster that mediates the biosynthesis of the mycotoxin fusarin C. Within the cluster, FUS1, FUS2, FUS8 and FUS9 are sufficient for fusarin production. The roles of the other FUS members are yet undetermined. The fusarin C synthetase FUS1 is responsible for the condensation of one acetyl-coenzyme A (CoA) unit with six malonyl-CoA units and the amide linkage of the arising heptaketide and homoserine, subsequently releasing the first intermediate, prefusarin, as an alcohol with an open ring structure. The cytochrome P450 monooxygenase FUS8 participates in multiple oxidation processes at carbon C-20 and is able to use the FUS1 product as substrate, resulting in formation of 20-hydroxy-prefusarin. This reaction seems to be essential before the 2-pyrrolidone ring closure can be catalyzed by FUS2, generating 20-hydroxy-fusarin. FUS8 is able to further oxidizes carbon C-20 after ring closure, resulting in the formation of carboxy-fusarin C. As the last step, FUS9 methylates the hydroxyl group at C-21 to generate fusarin C. Fusarin C can then rearrange to epi-fusarin C, the (z)-isomers, and fusarin A and fusarin D. The protein is Methyltransferase FUS9 of Gibberella moniliformis (strain M3125 / FGSC 7600) (Maize ear and stalk rot fungus).